The primary structure comprises 591 residues: ESX-1 secretion system protein EccCb1 (591 aa).

FtsK domains lie at 65–259 (LQDV…NETQ) and 359–545 (LTPA…EKQE). Residues 84–91 (GAPQTGKS) and 376–383 (GAAKSGKT) each bind ATP.

Part of the ESX-1 / type VII secretion system (T7SS), which is composed of cytosolic and membrane components. The ESX-1 membrane complex is composed of EccB1, EccCa1, EccCb1, EccD1 and EccE1. Interacts with EccCa1, EspK and the C-terminus of EsxB. Residues 1-261 interact with EsxB and an artificial EsxB-EsxA heterodimer.

It localises to the cytoplasm. EsxB binding to the second FtsK domain of EccCb1 causes multimerization; a subsequent unknown step relieves the allosteric inhibition of linker 2 on FtsK domain 1 (in EccCa1 subunit), activating the ATPase activity. Part of the ESX-1 specialized secretion system, which delivers several virulence factors to host cells during infection, including the key virulence factors EsxA (ESAT-6) and EsxB (CFP-10). EccCb1 may link the cytosolic components of the system with the membrane components. The sequence is that of ESX-1 secretion system protein EccCb1 from Mycobacterium tuberculosis (strain ATCC 25618 / H37Rv).